A 273-amino-acid polypeptide reads, in one-letter code: Eukaryotic translation initiation factor 3 subunit G-2 (273 aa).

A disordered region spans residues 168 to 192; that stretch reads PPFMKDGGGGSGGKNWGRGRDRDDS. Residues 173–183 show a composition bias toward gly residues; it reads DGGGGSGGKNW. The region spanning 193–271 is the RRM domain; the sequence is SAVRISNLSE…LILCVEWSKP (79 aa).

This sequence belongs to the eIF-3 subunit G family. In terms of assembly, component of the eukaryotic translation initiation factor 3 (eIF-3) complex. The eIF-3 complex interacts with pix.

It is found in the cytoplasm. In terms of biological role, RNA-binding component of the eukaryotic translation initiation factor 3 (eIF-3) complex, which is involved in protein synthesis of a specialized repertoire of mRNAs and, together with other initiation factors, stimulates binding of mRNA and methionyl-tRNAi to the 40S ribosome. The eIF-3 complex specifically targets and initiates translation of a subset of mRNAs involved in cell proliferation. This subunit can bind 18S rRNA. This is Eukaryotic translation initiation factor 3 subunit G-2 from Drosophila erecta (Fruit fly).